The following is a 277-amino-acid chain: Ribosomal protein L11 methyltransferase (277 aa).

S-adenosyl-L-methionine is bound by residues Thr-130, Gly-151, Asp-172, and Asn-213.

Belongs to the methyltransferase superfamily. PrmA family.

It localises to the cytoplasm. The enzyme catalyses L-lysyl-[protein] + 3 S-adenosyl-L-methionine = N(6),N(6),N(6)-trimethyl-L-lysyl-[protein] + 3 S-adenosyl-L-homocysteine + 3 H(+). Methylates ribosomal protein L11. This Campylobacter concisus (strain 13826) protein is Ribosomal protein L11 methyltransferase.